A 506-amino-acid chain; its full sequence is Maturase K (506 aa).

Belongs to the intron maturase 2 family. MatK subfamily.

The protein localises to the plastid. The protein resides in the chloroplast. Functionally, usually encoded in the trnK tRNA gene intron. Probably assists in splicing its own and other chloroplast group II introns. The sequence is that of Maturase K from Melilotus indicus (Sourclover).